Here is a 337-residue protein sequence, read N- to C-terminus: ERI1 exoribonuclease 3 (337 aa).

Residues 146–320 (FLVLDFEATC…DDCKNIANIM (175 aa)) form the Exonuclease domain. Mg(2+) is bound by residues D150, E152, and D249. E152 functions as the Proton acceptor in the catalytic mechanism. E152 serves as a coordination point for AMP. The Proton acceptor role is filled by H307. H307 lines the AMP pocket. Position 312 (D312) interacts with Mg(2+).

Interacts with PRNP. Mg(2+) serves as cofactor.

The protein is ERI1 exoribonuclease 3 (ERI3) of Bos taurus (Bovine).